We begin with the raw amino-acid sequence, 187 residues long: MYLYKKNYYGYAESLLDISISENNVEKYINDCFFILSIIQNNQVLILLFKSHFIGKQEKFNIIDKIFSAKIEKILVNFLKVIAKNNLFLYYKQILLKYIKLANSHLSQTWGEIQTAFPISSVMTSSFESILSKKLGKKVHLRHKINSKLISGIRIIVDNQIFENSLFSELKLLKQNLKKHLITKNDL.

It belongs to the ATPase delta chain family. In terms of assembly, F-type ATPases have 2 components, F(1) - the catalytic core - and F(0) - the membrane proton channel. F(1) has five subunits: alpha(3), beta(3), gamma(1), delta(1), epsilon(1). F(0) has three main subunits: a(1), b(2) and c(10-14). The alpha and beta chains form an alternating ring which encloses part of the gamma chain. F(1) is attached to F(0) by a central stalk formed by the gamma and epsilon chains, while a peripheral stalk is formed by the delta and b chains.

Its subcellular location is the cell membrane. Functionally, f(1)F(0) ATP synthase produces ATP from ADP in the presence of a proton or sodium gradient. F-type ATPases consist of two structural domains, F(1) containing the extramembraneous catalytic core and F(0) containing the membrane proton channel, linked together by a central stalk and a peripheral stalk. During catalysis, ATP synthesis in the catalytic domain of F(1) is coupled via a rotary mechanism of the central stalk subunits to proton translocation. In terms of biological role, this protein is part of the stalk that links CF(0) to CF(1). It either transmits conformational changes from CF(0) to CF(1) or is implicated in proton conduction. This Mesomycoplasma hyopneumoniae (strain 232) (Mycoplasma hyopneumoniae) protein is ATP synthase subunit delta.